A 185-amino-acid chain; its full sequence is Ribonuclease HII (185 aa).

In terms of domain architecture, RNase H type-2 spans 1–185 (MKICGIDEAG…LKHLQGILEF (185 aa)). Asp7, Glu8, and Asp96 together coordinate a divalent metal cation.

Belongs to the RNase HII family. Mn(2+) is required as a cofactor. The cofactor is Mg(2+).

It is found in the cytoplasm. It carries out the reaction Endonucleolytic cleavage to 5'-phosphomonoester.. Its function is as follows. Endonuclease that specifically degrades the RNA of RNA-DNA hybrids. The protein is Ribonuclease HII of Campylobacter hominis (strain ATCC BAA-381 / DSM 21671 / CCUG 45161 / LMG 19568 / NCTC 13146 / CH001A).